The primary structure comprises 294 residues: MVCFSSLFVAASAIAGVFASPVDHEQLAKRQSTPSSQGTHDGYFYSWWTDGGAAATYTNLAGGEYSVSWSNGGNLVGGKGWNPGSARTITYSGTYNPNGNSYLAVYGWTRNPQPWLTPLVVEYYVVENFGTYNPSSGATARGQVTHDGALYRLFESTRTNQPSIDGTATFQQYWAVRDVKRTGGTVNMATFFNAWTAAGMRLGTHNYQVVATEGYFSSGSARINVAGGGGSTPSPPSTPSPPTTPSPPPVTPPPSGGGSCAARWGQCGGSGWNGATCCSAGTCQAQNQWYSQCL.

Residues 1 to 19 form the signal peptide; that stretch reads MVCFSSLFVAASAIAGVFA. The 196-residue stretch at 31 to 226 folds into the GH11 domain; it reads QSTPSSQGTH…SSGSARINVA (196 aa). Glu122 acts as the Nucleophile in catalysis. Catalysis depends on Glu213, which acts as the Proton donor. A CBM1 domain is found at 259–294; the sequence is SCAARWGQCGGSGWNGATCCSAGTCQAQNQWYSQCL.

Belongs to the glycosyl hydrolase 11 (cellulase G) family.

The catalysed reaction is Endohydrolysis of (1-&gt;4)-beta-D-xylosidic linkages in xylans.. It participates in glycan degradation; xylan degradation. Its function is as follows. Endo-1,4-beta-xylanase involved in the hydrolysis of xylan, a major structural heterogeneous polysaccharide found in plant biomass representing the second most abundant polysaccharide in the biosphere, after cellulose. Exhibits immunity-inducing activity in Nicotiana benthamiana. Can induce strong oxidative burst, activate the expression of defense-related genes, and increase resistance against oomycete and fungal pathogens in N.benthamiana. This chain is Ethylene-inducing xylanase 3, found in Verticillium dahliae (strain VdLs.17 / ATCC MYA-4575 / FGSC 10137) (Verticillium wilt).